The chain runs to 1104 residues: Transient receptor potential cation channel subfamily M member 8 (1104 aa).

The disordered stretch occupies residues 1–22 (MSFEGARLSMRSRRNGTMGSTR). The Cytoplasmic segment spans residues 1–733 (MSFEGARLSM…LWYYVAFFTS (733 aa)). Residues 734-758 (PFVVFSWNVVFYIAFLLLFAYVLLM) form a helical membrane-spanning segment. Residues 759–765 (DFHSVPH) lie on the Extracellular side of the membrane. Residues 766–789 (TPELILYALVFVLFCDEVRQWYMN) traverse the membrane as a helical segment. Residues Glu782 and Gln785 each coordinate Ca(2+). Residues 790 to 796 (GVNYFTD) lie on the Cytoplasmic side of the membrane. A helical transmembrane segment spans residues 797–817 (LWNVMDTLGLFYFIAGIVFRL). Ca(2+) is bound by residues Asn799 and Asp802. At 818–822 (HSSNK) the chain is on the extracellular side. A helical membrane pass occupies residues 823 to 848 (SSLYSGRVIFCLDYIIFTLRLIHIFT). Topologically, residues 849 to 853 (VSRNL) are cytoplasmic. Residues 854–890 (GPKIIMLQRMLIDVFFFLFLFAVWMVAFGVARQGILR) form a helical membrane-spanning segment. Over 891 to 895 (QNEQR) the chain is Extracellular. The segment at residues 896–912 (WRWIFRSVIYEPYLAMF) is an intramembrane region (pore-forming). Topologically, residues 913–953 (GQVPSDVDSTTYDFSHCTFSGNESKPLCVELDEHNLPRFPE) are extracellular. N-linked (GlcNAc...) (complex) asparagine glycosylation occurs at Asn934. A helical transmembrane segment spans residues 954–984 (WITIPLVCIYMLSTNILLVNLLVAMFGYTVG). Residues 985–1104 (IVQENNDQVW…LLKEIANNIK (120 aa)) lie on the Cytoplasmic side of the membrane. Positions 1069–1104 (TKANDNSEEMRHRFRQLDSKLNDLKSLLKEIANNIK) form a coiled coil.

It belongs to the transient receptor (TC 1.A.4) family. LTrpC subfamily. TRPM8 sub-subfamily. In terms of assembly, homotetramer. Interacts (via N-terminus and C-terminus domains) with TCAF1; the interaction stimulates TRPM8 channel activity. Interacts (via N-terminus and C-terminus domains) with TCAF2; the interaction inhibits TRPM8 channel activity. N-glycosylation is not essential for but facilitates cell surface expression, multimerization, association with lipid rafts and ion channel activity. Expressed in dorsal root and trigeminal ganglia. Specifically expressed in a subset of pain- and temperature-sensing neurons. Not expressed in heavily myelinated neurons. Not expressed in neurons expressing TRPA1 or TRPV1.

Its subcellular location is the cell membrane. The protein localises to the membrane raft. The catalysed reaction is Ca(2+)(in) = Ca(2+)(out). It carries out the reaction Na(+)(in) = Na(+)(out). It catalyses the reaction K(+)(in) = K(+)(out). Its activity is regulated as follows. Activated by cold temperatures and by both natural and synthetic cooling compounds such as menthol and icilin. Activation of the channel requires the presence of PI(4,5)P2; PI(4,5)P2 is necessary to gate the channel. Activated by intracellular Ca(2+). Non-selective ion channel permeable to monovalent and divalent cations, including Na(+), K(+), and Ca(2+), with higher permeability for Ca(2+). Activated by multiple factors, such as temperature, voltage, pressure, and changes in osmolality. Activated by cool temperatures (&lt;23-28 degrees Celsius) and by chemical ligands evoking a sensation of coolness, such as menthol and icilin, therefore plays a central role in the detection of environmental cold temperatures. TRPM8 is a voltage-dependent channel; its activation by cold or chemical ligands shifts its voltage thresholds towards physiological membrane potentials, leading to the opening of the channel. In addition to its critical role in temperature sensing, regulates basal tear secretion by sensing evaporation-induced cooling and changes in osmolality. The protein is Transient receptor potential cation channel subfamily M member 8 (Trpm8) of Mus musculus (Mouse).